The following is a 449-amino-acid chain: Interferon-related developmental regulator 1 (449 aa).

Positions Met-1–Pro-10 are enriched in basic residues. The tract at residues Met-1–Asp-41 is disordered. Residues Arg-12–Gly-21 show a composition bias toward gly residues. A compositionally biased stretch (low complexity) spans Ala-22–Gly-31.

It belongs to the IFRD family. As to quaternary structure, interacts with PSIP1/LEDGF. In terms of tissue distribution, expressed at high levels in the embryonic brain in the period related to neuroblast proliferation and differentiation.

The protein localises to the cytoplasm. It localises to the cell membrane. The protein resides in the nucleus. In terms of biological role, probably participates in neurogenesis. Could play a role in regulating gene activity in the proliferative and/or differentiative pathways induced by NGF. This Rattus norvegicus (Rat) protein is Interferon-related developmental regulator 1 (Ifrd1).